The following is a 445-amino-acid chain: tRNA-2-methylthio-N(6)-dimethylallyladenosine synthase (445 aa).

In terms of domain architecture, MTTase N-terminal spans 9–125; that stretch reads LKYRILTYGC…LPYLIARAKE (117 aa). Positions 18, 54, 88, 162, 166, and 169 each coordinate [4Fe-4S] cluster. The Radical SAM core domain occupies 148 to 378; it reads RKPGLSAFVN…NRRQYQIATE (231 aa). The region spanning 381–444 is the TRAM domain; sequence QELQGSIQEV…TFSLFGEIFN (64 aa).

The protein belongs to the methylthiotransferase family. MiaB subfamily. In terms of assembly, monomer. Requires [4Fe-4S] cluster as cofactor.

It localises to the cytoplasm. It carries out the reaction N(6)-dimethylallyladenosine(37) in tRNA + (sulfur carrier)-SH + AH2 + 2 S-adenosyl-L-methionine = 2-methylsulfanyl-N(6)-dimethylallyladenosine(37) in tRNA + (sulfur carrier)-H + 5'-deoxyadenosine + L-methionine + A + S-adenosyl-L-homocysteine + 2 H(+). Catalyzes the methylthiolation of N6-(dimethylallyl)adenosine (i(6)A), leading to the formation of 2-methylthio-N6-(dimethylallyl)adenosine (ms(2)i(6)A) at position 37 in tRNAs that read codons beginning with uridine. In Syntrophomonas wolfei subsp. wolfei (strain DSM 2245B / Goettingen), this protein is tRNA-2-methylthio-N(6)-dimethylallyladenosine synthase.